A 100-amino-acid polypeptide reads, in one-letter code: Urease subunit gamma (100 aa).

The protein belongs to the urease gamma subunit family. As to quaternary structure, heterotrimer of UreA (gamma), UreB (beta) and UreC (alpha) subunits. Three heterotrimers associate to form the active enzyme.

It localises to the cytoplasm. It catalyses the reaction urea + 2 H2O + H(+) = hydrogencarbonate + 2 NH4(+). The protein operates within nitrogen metabolism; urea degradation; CO(2) and NH(3) from urea (urease route): step 1/1. This is Urease subunit gamma from Hahella chejuensis (strain KCTC 2396).